The sequence spans 220 residues: MDAKSNAVFWQEKWERGETGFHEPQANPLLTRHIAALDLPAGARIFVPLCGMSQDMVWLAGQGFHVTGCELSDIAVHRFFNDLDLTPDIRDVGPLRCFSAGTIRIFAGNIFDLTPDLLGLMDGIYDRAALIALPEDLRRAYAAHLLSLTGPVPELLVTLDYDQSCLKGPPFSVDEAFLRECYGQAYAFTLLESRAVEGGLKGRCPASENVWRFSPLPPSS.

Residues tryptophan 14, leucine 49, glutamate 70, and arginine 127 each coordinate S-adenosyl-L-methionine.

It belongs to the class I-like SAM-binding methyltransferase superfamily. TPMT family.

It localises to the cytoplasm. The enzyme catalyses S-adenosyl-L-methionine + a thiopurine = S-adenosyl-L-homocysteine + a thiopurine S-methylether.. The sequence is that of Thiopurine S-methyltransferase from Gluconobacter oxydans (strain 621H) (Gluconobacter suboxydans).